A 284-amino-acid polypeptide reads, in one-letter code: 4-diphosphocytidyl-2-C-methyl-D-erythritol kinase (284 aa).

Lysine 9 is a catalytic residue. 92-102 (PMGGGIGGGSS) lines the ATP pocket. Aspartate 134 is a catalytic residue.

This sequence belongs to the GHMP kinase family. IspE subfamily.

It catalyses the reaction 4-CDP-2-C-methyl-D-erythritol + ATP = 4-CDP-2-C-methyl-D-erythritol 2-phosphate + ADP + H(+). Its pathway is isoprenoid biosynthesis; isopentenyl diphosphate biosynthesis via DXP pathway; isopentenyl diphosphate from 1-deoxy-D-xylulose 5-phosphate: step 3/6. Catalyzes the phosphorylation of the position 2 hydroxy group of 4-diphosphocytidyl-2C-methyl-D-erythritol. The polypeptide is 4-diphosphocytidyl-2-C-methyl-D-erythritol kinase (Stutzerimonas stutzeri (strain A1501) (Pseudomonas stutzeri)).